The sequence spans 155 residues: SsrA-binding protein (155 aa).

The span at 135–147 (TIKRRDQERDIKK) shows a compositional bias: basic and acidic residues. Residues 135-155 (TIKRRDQERDIKKQMKHYNAR) are disordered.

Belongs to the SmpB family.

The protein localises to the cytoplasm. Its function is as follows. Required for rescue of stalled ribosomes mediated by trans-translation. Binds to transfer-messenger RNA (tmRNA), required for stable association of tmRNA with ribosomes. tmRNA and SmpB together mimic tRNA shape, replacing the anticodon stem-loop with SmpB. tmRNA is encoded by the ssrA gene; the 2 termini fold to resemble tRNA(Ala) and it encodes a 'tag peptide', a short internal open reading frame. During trans-translation Ala-aminoacylated tmRNA acts like a tRNA, entering the A-site of stalled ribosomes, displacing the stalled mRNA. The ribosome then switches to translate the ORF on the tmRNA; the nascent peptide is terminated with the 'tag peptide' encoded by the tmRNA and targeted for degradation. The ribosome is freed to recommence translation, which seems to be the essential function of trans-translation. This Streptococcus pyogenes serotype M6 (strain ATCC BAA-946 / MGAS10394) protein is SsrA-binding protein.